We begin with the raw amino-acid sequence, 83 residues long: Apolipoprotein C-I, basic form (83 aa).

An N-terminal signal peptide occupies residues 1 to 26 (MRLFLSLPVLVVVLSMVLEGPAPAQG).

This sequence belongs to the apolipoprotein C1 family.

It is found in the secreted. Functionally, inhibitor of lipoprotein binding to the low density lipoprotein (LDL) receptor, LDL receptor-related protein, and very low density lipoprotein (VLDL) receptor. Associates with high density lipoproteins (HDL) and the triacylglycerol-rich lipoproteins in the plasma and makes up about 10% of the protein of the VLDL and 2% of that of HDL. Appears to interfere directly with fatty acid uptake and is also the major plasma inhibitor of cholesteryl ester transfer protein (CETP). Binds free fatty acids and reduces their intracellular esterification. Modulates the interaction of APOE with beta-migrating VLDL and inhibits binding of beta-VLDL to the LDL receptor-related protein. In Cercocebus atys (Sooty mangabey), this protein is Apolipoprotein C-I, basic form (APOC1B).